A 251-amino-acid chain; its full sequence is MKLMRIQEMEEYILSHGTVSLDELCQVFNVSKNTVRRDINKLTEKGAIEKVYGGVTSIEKTALVPFENRTIQHQDEKTKIAHYASRFIEDHDLVFIDSGTTTKSILDTLDPAKNVTILTNSLDIINAASALKNINLIIIGNNYKRKTRSFVGMDDPAMLDKYNINKAFMSATGTTLTHGLTNSDLLEYEIKKRISEKAKEVYLLADHSKFGKSTLLTYAPFDRLHCIVTSQPLDDEYTQYCNEHQIGIHLA.

Residues 1 to 57 enclose the HTH deoR-type domain; that stretch reads MKLMRIQEMEEYILSHGTVSLDELCQVFNVSKNTVRRDINKLTEKGAIEKVYGGVTS. The segment at residues 19-38 is a DNA-binding region (H-T-H motif); sequence VSLDELCQVFNVSKNTVRRD.

Functionally, iol operon repressor. This chain is HTH-type transcriptional regulator IolR (iolR), found in Bacillus subtilis (strain 168).